A 134-amino-acid chain; its full sequence is Methylmalonyl-CoA decarboxylase subunit gamma (134 aa).

Residues 28-38 show a composition bias toward low complexity; that stretch reads APAARPAAAPA. The interval 28-67 is disordered; that stretch reads APAARPAAAPAPAAPKPAAAPAPAPAPKTTAAGAGAGANT. Positions 39-53 are enriched in pro residues; it reads PAAPKPAAAPAPAPA. The segment covering 54–67 has biased composition (low complexity); the sequence is PKTTAAGAGAGANT. One can recognise a Biotinyl-binding domain in the interval 58–134; the sequence is AAGAGAGANT…NAGDILVVLS (77 aa). Position 100 is an N6-biotinyllysine (K100).

The methylmalonyl-CoA decarboxylase is composed of four subunits: the carboxyltransferase alpha subunit (MmdA), the tunnel beta subunit (MmdB), the biotin-containing gamma subunit (MmdC) and the delta subunit (MmdD). Biotin serves as cofactor.

The protein resides in the cell membrane. The enzyme catalyses (S)-methylmalonyl-CoA + Na(+)(in) + H(+)(out) = propanoyl-CoA + Na(+)(out) + CO2. Biotin-containing subunit of the sodium ion pump methylmalonyl-CoA decarboxylase, which converts the chemical energy of a decarboxylation reaction into an electrochemical gradient of Na(+) ions across the cytoplasmic membrane, thereby creating a sodium ion motive force that is used for ATP synthesis. The polypeptide is Methylmalonyl-CoA decarboxylase subunit gamma (Propionigenium modestum).